Consider the following 361-residue polypeptide: POU domain, class 3, transcription factor 4 (361 aa).

Disordered stretches follow at residues 99 to 131 (PHVA…GQPL) and 144 to 192 (MLEH…PTSD). Over residues 119 to 131 (APNSSITNSGQPL) the composition is skewed to polar residues. Residues 165–183 (VLREPPDHGELGSHHCQDH) are compositionally biased toward basic and acidic residues. Positions 186 to 260 (EETPTSDELE…LLNKWLEEAD (75 aa)) constitute a POU-specific domain. At Ser265 the chain carries Phosphoserine. A DNA-binding region (homeobox) is located at residues 278–337 (KRKKRTSIEVSVKGVLETHFLKCPKPAAQEISSLADSLQLEKEVVRVWFCNRRQKEKRMT). The segment at 334 to 361 (KRMTPPGDQQPHEVYSHTVKTDASCHDL) is disordered. Basic and acidic residues predominate over residues 343 to 361 (QPHEVYSHTVKTDASCHDL).

This sequence belongs to the POU transcription factor family. Class-3 subfamily.

The protein localises to the nucleus. In terms of biological role, probable transcription factor which exert its primary action widely during early neural development and in a very limited set of neurons in the mature brain. The chain is POU domain, class 3, transcription factor 4 (Pou3f4) from Mesocricetus auratus (Golden hamster).